We begin with the raw amino-acid sequence, 792 residues long: Probable CoA-transferase Rv1866 (792 aa).

D558 acts as the Nucleophile in catalysis.

The protein belongs to the CoA-transferase III family.

Probable CoA-transferase. This Mycobacterium tuberculosis (strain ATCC 25618 / H37Rv) protein is Probable CoA-transferase Rv1866.